Here is a 502-residue protein sequence, read N- to C-terminus: Lysine--tRNA ligase (502 aa).

Mg(2+) is bound by residues E412 and E419.

This sequence belongs to the class-II aminoacyl-tRNA synthetase family. Homodimer. Mg(2+) is required as a cofactor.

It is found in the cytoplasm. The enzyme catalyses tRNA(Lys) + L-lysine + ATP = L-lysyl-tRNA(Lys) + AMP + diphosphate. This is Lysine--tRNA ligase from Histophilus somni (strain 2336) (Haemophilus somnus).